The sequence spans 449 residues: Tubulin beta-5 chain (449 aa).

The GTP site is built by Gln11, Glu70, Ser139, Gly143, Thr144, Gly145, Asn205, and Asn227. Glu70 serves as a coordination point for Mg(2+). A disordered region spans residues 427–449; it reads QDATADEEGEYDVEEEEEGDYET. A compositionally biased stretch (acidic residues) spans 430-449; sequence TADEEGEYDVEEEEEGDYET.

The protein belongs to the tubulin family. In terms of assembly, dimer of alpha and beta chains. A typical microtubule is a hollow water-filled tube with an outer diameter of 25 nm and an inner diameter of 15 nM. Alpha-beta heterodimers associate head-to-tail to form protofilaments running lengthwise along the microtubule wall with the beta-tubulin subunit facing the microtubule plus end conferring a structural polarity. Microtubules usually have 13 protofilaments but different protofilament numbers can be found in some organisms and specialized cells. It depends on Mg(2+) as a cofactor.

It localises to the cytoplasm. The protein localises to the cytoskeleton. Its function is as follows. Tubulin is the major constituent of microtubules, a cylinder consisting of laterally associated linear protofilaments composed of alpha- and beta-tubulin heterodimers. Microtubules grow by the addition of GTP-tubulin dimers to the microtubule end, where a stabilizing cap forms. Below the cap, tubulin dimers are in GDP-bound state, owing to GTPase activity of alpha-tubulin. This Arabidopsis thaliana (Mouse-ear cress) protein is Tubulin beta-5 chain (TUBB5).